The primary structure comprises 269 residues: Ribosomal RNA large subunit methyltransferase E (269 aa).

Residues Gly48, Trp50, Asp68, Asp86, and Asp111 each coordinate S-adenosyl-L-methionine. The Proton acceptor role is filled by Lys151. In terms of domain architecture, TRAM spans 198 to 256; the sequence is PVAAGDRIEVTVEERGDEGDGIAYVEGYSIFVSDADVGETVTVEVVDAKPRFGFATRVD.

The protein belongs to the class I-like SAM-binding methyltransferase superfamily. RNA methyltransferase RlmE family.

It localises to the cytoplasm. It carries out the reaction uridine(2552) in 23S rRNA + S-adenosyl-L-methionine = 2'-O-methyluridine(2552) in 23S rRNA + S-adenosyl-L-homocysteine + H(+). Functionally, specifically methylates the uridine in position 2552 of 23S rRNA at the 2'-O position of the ribose in the fully assembled 50S ribosomal subunit. The sequence is that of Ribosomal RNA large subunit methyltransferase E from Halorubrum lacusprofundi (strain ATCC 49239 / DSM 5036 / JCM 8891 / ACAM 34).